A 2087-amino-acid polypeptide reads, in one-letter code: Rho GTPase-activating protein 32 (2087 aa).

In terms of domain architecture, PX; atypical spans 131-245 (GSIQLSLSEE…LTWMEIDNKG (115 aa)). An SH3 domain is found at 259–321 (PAVGAAHVIK…PGHCVELINQ (63 aa)). The region spanning 372–567 (CDLGEHLLNS…FILNHVDVLF (196 aa)) is the Rho-GAP domain. Phosphoserine is present on residues Ser-706, Ser-709, Ser-732, and Ser-738. Residues 818–858 (FLDSPGYSKDKPSANKKDAETGSSQCQTPGSTASSEPVSPL) are disordered. The segment covering 825–837 (SKDKPSANKKDAE) has biased composition (basic and acidic residues). Residues 838-854 (TGSSQCQTPGSTASSEP) show a composition bias toward polar residues. Residues Ser-852, Ser-856, and Ser-892 each carry the phosphoserine modification. The span at 927–938 (SNTTAQNASSST) shows a compositional bias: low complexity. 3 disordered regions span residues 927-1038 (SNTT…PPKN), 1103-1143 (PAEQ…EQHH), and 1169-1257 (VPLD…ENTS). Ser-952 is subject to Phosphoserine. Composition is skewed to low complexity over residues 994-1005 (SVSSSQSKAVAS) and 1019-1029 (QDSVPVSSVSL). Polar residues predominate over residues 1124–1138 (TTATGDPTHSNTTES). Residues 1172–1182 (DSEKSDDHVSF) are compositionally biased toward basic and acidic residues. Polar residues predominate over residues 1188-1203 (GKNSMPTVSFLDQDQS). At Ser-1203 the chain carries Phosphoserine. Positions 1222 to 1232 (DKLHHPLEFAD) are enriched in basic and acidic residues. The segment at 1391–1711 (RVPLLHLRAE…YSYAGLAPRP (321 aa)) is interaction with GAB2. An asymmetric dimethylarginine mark is found at Arg-1523 and Arg-1533. At Ser-1585 the chain carries Phosphoserine. Residues 1685-2087 (PNRDFAFYNP…QHPETQIHAE (403 aa)) form an interaction with FYN region. Positions 1798–1896 (PGKTGLLSVA…QFCESKNGPP (99 aa)) are disordered. Residues 1823–1838 (GEDRFYRRHPEAEMDR) show a composition bias toward basic and acidic residues. A compositionally biased stretch (polar residues) spans 1847 to 1862 (STQPEKPSLPQKQSSL). Residues 1875–1889 (PEHRAHQEASHRQFC) show a composition bias toward basic and acidic residues. Omega-N-methylarginine is present on Arg-2037.

It belongs to the PX domain-containing GAP family. Interacts with NTRK1 (via cytoplasmic domain); the interaction is independent of the phosphorylation state of NTRK1. Interacts with SHC3 (via SH2 domain). Interacts with RASA1 (via SH3 domain); the interaction is necessary for the Ras activation and cell transforming activities of ARHGAP32. Interacts with GAB1 and GAB2. Interacts with CRK and CRKL. Found in a complex with CRKL and BCAR1; upon EGF stimulation BCAR1 may be replaced by EGFR. Interacts with NCK1 (via SH3 domain); NCK1 recruits phosphorylated BCAR1 to the complex. Isoform 2 interacts with FYN; the interaction appears to be dependent on tyrosine phosphorylation of ARHGAP32. Interacts with EGFR; the interaction requires EGF stimulation and is increased by SHC3. Interacts with CDC42; the interaction requires constitutively active CDC42. Interacts with CTNNB1. Interacts with GRIN2B. Interacts with DLG4 and CDH2. Interacts with GPHN. In terms of processing, isoform 2 is phosphorylated on multiple tyrosine residues by FYN. Phosphorylated tyrosine residues undergo dephosphorylation after stimulation of NMDA receptors. Phosphorylated in vitro by CaMK2 in the presence of calmodulin and calcium; which inhibits GAP activity. In terms of tissue distribution, isoform 1 and isoform 2 are highly expressed in brain and testis. Isoform 1 is also expressed in other tissues such as lung, liver and spleen.

Its subcellular location is the postsynaptic density. It localises to the cell projection. The protein resides in the dendritic spine. The protein localises to the cytoplasm. It is found in the cell cortex. Its subcellular location is the endosome membrane. It localises to the golgi apparatus membrane. The protein resides in the endoplasmic reticulum membrane. The protein localises to the membrane. In terms of biological role, GTPase-activating protein (GAP) promoting GTP hydrolysis on RHOA, CDC42 and RAC1 small GTPases. May be involved in the differentiation of neuronal cells during the formation of neurite extensions. Involved in NMDA receptor activity-dependent actin reorganization in dendritic spines. May mediate cross-talks between Ras- and Rho-regulated signaling pathways in cell growth regulation. Isoform 2 has higher GAP activity. The sequence is that of Rho GTPase-activating protein 32 (ARHGAP32) from Homo sapiens (Human).